The following is a 550-amino-acid chain: Complement control protein (550 aa).

The signal sequence occupies residues Met-1–Gly-19. Sushi domains follow at residues Glu-23–Lys-83, Lys-84–Lys-150, Glu-151–Leu-209, and Ala-210–Leu-268. Intrachain disulfides connect Cys-25–Cys-68, Cys-53–Cys-81, Cys-86–Cys-131, Cys-116–Cys-148, Cys-153–Cys-194, Cys-180–Cys-207, Cys-212–Cys-254, and Cys-240–Cys-266. N-linked (GlcNAc...) asparagine; by host glycans are attached at residues Asn-63 and Asn-111. Asn-197 carries an N-linked (GlcNAc...) asparagine; by host glycan. N-linked (GlcNAc...) asparagine; by host glycans are attached at residues Asn-255, Asn-275, and Asn-299. The disordered stretch occupies residues Glu-269 to Thr-338. Composition is skewed to polar residues over residues Glu-288–Glu-302 and Thr-312–Glu-321. N-linked (GlcNAc...) asparagine; by host glycosylation is found at Asn-334, Asn-371, Asn-374, and Asn-378. Disordered stretches follow at residues Thr-387–Thr-408 and Ile-420–Ala-516. Polar residues predominate over residues Pro-424–His-440. N-linked (GlcNAc...) asparagine; by host glycans are attached at residues Asn-426, Asn-445, Asn-455, and Asn-483. The segment covering Ile-450–Lys-476 has biased composition (polar residues). The span at Lys-484–Asp-495 shows a compositional bias: polar residues. A helical transmembrane segment spans residues Ile-528 to Phe-548.

Its subcellular location is the host membrane. It localises to the virion membrane. In terms of biological role, inhibits the complement component of the host innate immune response. Regulates host C3 convertases, accelerating their decay, and acts as a cofactor for factor I degradation of C4b and C3b. Also binds heparin, and therefore may play two distinct roles when incorporated in virion membranes: immune evasion and host cell binding. The polypeptide is Complement control protein (ORF4) (Human herpesvirus 8 type P (isolate GK18) (HHV-8)).